The primary structure comprises 147 residues: MYAIVEIAGQQFKVSKDLKVYVHRLANEEGSKVSFDKVLLLDDNGNVTLGAPAIEGASVEAKVLQHLKGDKVIVFKKKRRKGYKKRNGHRQYLTQIVIEGITAAGGTKKAAAKKAVVAEEAAATEEVEAAPKAKKAAPKAKKEATKE.

The interval 125-147 (EEVEAAPKAKKAAPKAKKEATKE) is disordered.

This sequence belongs to the bacterial ribosomal protein bL21 family. As to quaternary structure, part of the 50S ribosomal subunit. Contacts protein L20.

Functionally, this protein binds to 23S rRNA in the presence of protein L20. This is Large ribosomal subunit protein bL21 from Flavobacterium johnsoniae (strain ATCC 17061 / DSM 2064 / JCM 8514 / BCRC 14874 / CCUG 350202 / NBRC 14942 / NCIMB 11054 / UW101) (Cytophaga johnsonae).